Here is a 754-residue protein sequence, read N- to C-terminus: LON peptidase N-terminal domain and RING finger protein 2 (754 aa).

TPR repeat units lie at residues 23-58 and 59-91; these read IAQR…QPDR and GLCL…GALR. The tract at residues 112–136 is disordered; sequence PLSAENPGGEPEAPGEGGPAPEPRA. A compositionally biased stretch (low complexity) spans 115–125; that stretch reads AENPGGEPEAP. TPR repeat units lie at residues 197–230, 231–264, and 266–298; these read LRRL…APDD, NSLL…EPLL, and KGHQ…NPEC. The interval 398–439 is disordered; sequence GLKRQFPDDVEDAPDLNAPGKIPKKDLSLQRSPNSETEESQG. Polar residues predominate over residues 426–439; the sequence is LQRSPNSETEESQG. A TPR 6 repeat occupies 447–483; that stretch reads FECALCMRLLFEPVTTPCGHTFCLKCLERCLDHAPHC. An RING-type zinc finger spans residues 449–487; sequence CALCMRLLFEPVTTPCGHTFCLKCLERCLDHAPHCPLCK. The 210-residue stretch at 528–737 folds into the Lon N-terminal domain; it reads MSELSNLTRD…AIRRILVIIT (210 aa).

The sequence is that of LON peptidase N-terminal domain and RING finger protein 2 (LONRF2) from Homo sapiens (Human).